A 327-amino-acid polypeptide reads, in one-letter code: CREB homolog crh-1 (327 aa).

The KID domain maps to 16–75 (SPLMMLLFKALQEGGDSEDEARRRREQLNRRPSYRMILKDLETADKVMKKEPEETPPSSV). 2 disordered regions span residues 27 to 114 (QEGG…SPYG) and 151 to 200 (KVFP…VQSL). Basic and acidic residues predominate over residues 35–44 (EARRRREQLN). Residue S48 is modified to Phosphoserine. The segment covering 52 to 68 (ILKDLETADKVMKKEPE) has biased composition (basic and acidic residues). Positions 71 to 84 (PPSSVDASPLQFQS) are enriched in polar residues. The segment covering 161 to 172 (GLGGGGGGGGVP) has biased composition (gly residues). Over residues 173 to 199 (GPSSGIAGMSVQPPTSSTPSQQQSVQS) the composition is skewed to low complexity. Positions 266 to 317 (NRKRQVRLLKNREAAKECRRKKKEYVKCLENRVSVLENQNKALIEELKTLKE) constitute a bZIP domain. Residues 267–292 (RKRQVRLLKNREAAKECRRKKKEYVK) form a basic motif region. Residues 284-318 (RRKKKEYVKCLENRVSVLENQNKALIEELKTLKEL) are a coiled coil. A leucine-zipper region spans residues 294–315 (LENRVSVLENQNKALIEELKTL).

This sequence belongs to the bZIP family. Interacts with CREB-regulated transcription coactivator homolog crtc-1. Post-translationally, transcriptional activity is enhanced by phosphorylation. Phosphorylated by cmk-1. In terms of tissue distribution, expressed widely, including in head neurons AFD, gustatory neurons ASE, the olfactory neurons AWC, and in the ASI sensory neurons, as well as in the intestine and gonads in hermaphrodites.

The protein localises to the nucleus. Transcription factor. Transcriptional activity probably positively regulated by phosphorylation. Modulates expression of target genes, acting by binding to regulatory cAMP response elements (CRE). Acts downstream of the calcium-triggered CaMKK-CaMK1 signaling cascade, consisting of the protein kinase kinase ckk-1 and the protein kinase cmk-1. Plays a role in learning and memory, feeding behavior, stress response, entry into the dauer stage and modulation of lifespan. Involved in commitment to the developmentally arrested larval state known as dauer, acting by positively regulating the expression of dauer-inhibiting TGF-beta-like daf-7 in the ASI neurons. Plays a role in both associative and non-associative long-term memory (LTM). Involved in modulating feeding behavior, acting by regulating transcription of tryptophan hydroxylase tph-1 in serotonergic ADF neurons. Regulates transcription of genes involved in endoplasmic reticulum (ER) stress. Involved in modulation of lifespan, in response to raised temperature, but independently of the heat-shock response pathway, acting by regulating transcription of FMRFamide-like neuropeptides flp-6 in the AFD neuron. Its function is as follows. Plays a role in associative long-term memory (LTM) and learning. Functionally, plays a role in associative long-term memory (LTM) and learning; perhaps required at the time of acquisition and/or the consolidation phase of memory formation. The polypeptide is CREB homolog crh-1 (Caenorhabditis elegans).